Here is a 607-residue protein sequence, read N- to C-terminus: UvrABC system protein C (607 aa).

The 79-residue stretch at 16 to 94 folds into the GIY-YIG domain; that stretch reads GRPGVYRMFD…IKEWRPPYNI (79 aa). Residues 203–238 enclose the UVR domain; the sequence is QQLGNELNAEMEKAAMALDFEKAAELRDQIALLRRV.

This sequence belongs to the UvrC family. As to quaternary structure, interacts with UvrB in an incision complex.

It localises to the cytoplasm. In terms of biological role, the UvrABC repair system catalyzes the recognition and processing of DNA lesions. UvrC both incises the 5' and 3' sides of the lesion. The N-terminal half is responsible for the 3' incision and the C-terminal half is responsible for the 5' incision. This is UvrABC system protein C from Pseudomonas putida (strain ATCC 700007 / DSM 6899 / JCM 31910 / BCRC 17059 / LMG 24140 / F1).